A 447-amino-acid polypeptide reads, in one-letter code: 1-aminocyclopropane-1-carboxylate synthase 7 (447 aa).

Positions 61 and 100 each coordinate substrate. Residue lysine 285 is modified to N6-(pyridoxal phosphate)lysine.

It belongs to the class-I pyridoxal-phosphate-dependent aminotransferase family. In terms of assembly, homodimer and heterodimer. In vivo, the relevance of heterodimerization with other ACS enzymes is however unsure. Interacts with XBAT32. The cofactor is pyridoxal 5'-phosphate. Ubiquitinated by XBAT32. Ubiquitination probably leads to its subsequent degradation, thus controlling ethylene production. As to expression, expressed in roots.

It carries out the reaction S-adenosyl-L-methionine = 1-aminocyclopropane-1-carboxylate + S-methyl-5'-thioadenosine + H(+). It participates in alkene biosynthesis; ethylene biosynthesis via S-adenosyl-L-methionine; ethylene from S-adenosyl-L-methionine: step 1/2. In terms of biological role, 1-aminocyclopropane-1-carboxylate synthase (ACS) enzymes catalyze the conversion of S-adenosyl-L-methionine (SAM) into 1-aminocyclopropane-1-carboxylate (ACC), a direct precursor of ethylene. The sequence is that of 1-aminocyclopropane-1-carboxylate synthase 7 (ACS7) from Arabidopsis thaliana (Mouse-ear cress).